The chain runs to 420 residues: Histidine--tRNA ligase (420 aa).

Belongs to the class-II aminoacyl-tRNA synthetase family. In terms of assembly, homodimer.

Its subcellular location is the cytoplasm. It carries out the reaction tRNA(His) + L-histidine + ATP = L-histidyl-tRNA(His) + AMP + diphosphate + H(+). The chain is Histidine--tRNA ligase from Desulforudis audaxviator (strain MP104C).